Here is a 156-residue protein sequence, read N- to C-terminus: Small ribosomal subunit protein uS7 (156 aa).

This sequence belongs to the universal ribosomal protein uS7 family. Part of the 30S ribosomal subunit. Contacts proteins S9 and S11.

One of the primary rRNA binding proteins, it binds directly to 16S rRNA where it nucleates assembly of the head domain of the 30S subunit. Is located at the subunit interface close to the decoding center, probably blocks exit of the E-site tRNA. The chain is Small ribosomal subunit protein uS7 from Thermodesulfovibrio yellowstonii (strain ATCC 51303 / DSM 11347 / YP87).